Consider the following 383-residue polypeptide: uncharacterized protein (383 aa).

The first 23 residues, 1-23, serve as a signal peptide directing secretion; it reads MKLTSIPIASTLLSLLAASGTLA.

The protein belongs to the but2 family.

The protein localises to the cytoplasm. It localises to the nucleus. This is an uncharacterized protein from Schizosaccharomyces pombe (strain 972 / ATCC 24843) (Fission yeast).